The sequence spans 517 residues: GMP synthase [glutamine-hydrolyzing] (517 aa).

Positions 9–199 (RILILDFGSQ…VLGVCGCERL (191 aa)) constitute a Glutamine amidotransferase type-1 domain. The Nucleophile role is filled by cysteine 86. Catalysis depends on residues histidine 173 and glutamate 175. Positions 200–392 (WTSESIIEDA…LGLPYNMLYR (193 aa)) constitute a GMPS ATP-PPase domain. ATP is bound at residue 227 to 233 (SGGVDSS).

As to quaternary structure, homodimer.

The enzyme catalyses XMP + L-glutamine + ATP + H2O = GMP + L-glutamate + AMP + diphosphate + 2 H(+). It functions in the pathway purine metabolism; GMP biosynthesis; GMP from XMP (L-Gln route): step 1/1. In terms of biological role, catalyzes the synthesis of GMP from XMP. This chain is GMP synthase [glutamine-hydrolyzing], found in Vibrio cholerae serotype O1 (strain ATCC 39541 / Classical Ogawa 395 / O395).